Here is a 190-residue protein sequence, read N- to C-terminus: Cytoplasmic envelopment protein 3 (190 aa).

G2 carries the N-myristoyl glycine; by host lipid modification. Residues 27–190 (RQVSLRSYDN…TKKPAASLPF (164 aa)) form a disordered region. The segment covering 30–43 (SLRSYDNIPPTSSS) has biased composition (polar residues). Residues 44–58 (DEGEDDDDGEDDDNE) show a composition bias toward acidic residues. Residues 80–90 (SHREATHDGSK) are compositionally biased toward basic and acidic residues. The span at 108-123 (KQSKKKKKPSKHHHHQ) shows a compositional bias: basic residues. Positions 130-139 (ETDDLDEEDT) are enriched in acidic residues.

Belongs to the herpesviridae cytoplasmic envelopment protein 3 family. As to quaternary structure, interacts with cytoplasmic envelopment protein 2; this interaction is essential for the proper localization of each protein to the assembly complex and thus for the production of infectious virus. Post-translationally, myristoylation and palmitoylation (probably on one or more of the nearby cysteines at the N-terminus) enable membrane-binding and Golgi apparatus-specific targeting and are essential for efficient packaging. In terms of processing, phosphorylated. Phosphorylation does not seem to be required for recycling to the host Golgi apparatus. Packaging is selective for underphosphorylated forms.

The protein localises to the virion tegument. It localises to the virion membrane. The protein resides in the host cell membrane. Its subcellular location is the host Golgi apparatus membrane. Its function is as follows. Plays an important role in the cytoplasmic envelopment of tegument proteins and capsids during the assembly and egress processes. Also participates in viral entry at the fusion step probably by regulating the core fusion machinery. The sequence is that of Cytoplasmic envelopment protein 3 (UL99) from Human cytomegalovirus (strain AD169) (HHV-5).